The sequence spans 62 residues: Bacteriocin piscicolin-126 (62 aa).

Residues methionine 1–glycine 18 constitute a propeptide that is removed on maturation. Cysteine 27 and cysteine 32 are disulfide-bonded.

The protein localises to the secreted. Functionally, inhibits the growth of several Gram-positive bacteria, especially the food-borne pathogen L.monocytogenes, but has no effect on the growth of a number of yeasts and Gram-negative bacteria. The polypeptide is Bacteriocin piscicolin-126 (pisA) (Carnobacterium maltaromaticum (Carnobacterium piscicola)).